The primary structure comprises 579 residues: MNAIVALCHFCELHGPRTLFCTEVLHAPLPQGAGSGDSPGQVEQAEEEEGGIQMSSRVRAHSPAEGASTDSSSPGPKKSDMCEGCRSLAVGHPGYISHDKETSIKYVSHQHPNHPQLFSIVRQACVRSLSCEVCPGREGPIFFGDEQHGFVFSHTFFIKDSLARGFQRWYSIIAIMMDRIYLINSWPFLLGKIRGIISELQGKALKVFEAEQFGCPQRAQRMNTAFTPFLHQRNGNAARSLTSLTSDDNLWACLHTSFAWLLKACGSRLTEKLLEGAPTEDTLVQMEKLADLEEESESWDNSEAEEEEKAPATAEGAEGRELASCPTESSFLSACGSWQPPKLSVFKSLRHMRQVLGAPSFRMLAWHVLMGNQVIWKSRDVNLVHSAFEVLRTMLPVGCVRIIPYSSQYEEAYRCNFLGLSPPVPIPAHVLASEFVVVVEVHTATRSNPHPAGCEDDQSLSKYEFVVTSGSPVAADRVGPTILNKMEAALTNQNLSVDVVDQCLVCLKEEWMNKVKVLFKFTKVDSRPKEDTQKLLSVLGASEEDNVKLLKFWMTGLSKTYKSHLMSTVRSPTAAESRN.

Residues 32 to 82 (GAGSGDSPGQVEQAEEEEGGIQMSSRVRAHSPAEGASTDSSSPGPKKSDMC) form a disordered region. Phosphoserine is present on residues Ser62 and Ser73. The region spanning 86-242 (RSLAVGHPGY…RNGNAARSLT (157 aa)) is the uDENN FLCN/SMCR8-type domain. Residues 287-310 (EKLADLEEESESWDNSEAEEEEKA) are a coiled coil. Over residues 294–308 (EESESWDNSEAEEEE) the composition is skewed to acidic residues. The disordered stretch occupies residues 294–320 (EESESWDNSEAEEEEKAPATAEGAEGR). Ser302, Ser406, Ser537, Ser542, and Ser571 each carry phosphoserine. One can recognise a cDENN FLCN/SMCR8-type domain in the interval 339 to 491 (QPPKLSVFKS…ILNKMEAALT (153 aa)). The dDENN FLCN/SMCR8-type domain maps to 493–558 (QNLSVDVVDQ…LLKFWMTGLS (66 aa)).

The protein belongs to the folliculin family. As to quaternary structure, interacts (via C-terminus) with FNIP1 or FNIP2 (via C-terminus). Component of the lysosomal folliculin complex (LFC), composed of FLCN, FNIP1 (or FNIP2), RagA/RRAGA or RagB/RRAGB GDP-bound, RagC/RRAGC or RagD/RRAGD GTP-bound, and Ragulator. Interaction with FNIP1 or FNIP2 mediates indirect interaction with the PRKAA1, PRKAB1 and PRKAG1 subunits of 5'-AMP-activated protein kinase (AMPK). Interacts with HSP90AA1 in the presence of FNIP1. Interacts with HSP70, STUB1, CDC37, AHSA1, CCT2, STIP1, PTGES3 and PPP5C. Interacts with GABARAP; interaction takes place in the presence of FNIP1 and/or FNIP2. Interacts with RILP; the interaction is direct and promotes association between RILP and RAB34. Interacts with KIF3A and KIF3B. Interacts with lactate dehydrogenase LDHA, but not LDHB; the interaction is direct, may preferentially bind LDHA dimers rather than tetramers, and regulates LDHA activity, acting as an uncompetitive inhibitor. Phosphorylation by ULK1 modulates the interaction with GABARAP and is required to regulate autophagy. In terms of tissue distribution, expressed in kidney.

It is found in the lysosome membrane. It localises to the cytoplasm. The protein localises to the cytosol. The protein resides in the cell projection. Its subcellular location is the cilium. It is found in the cytoskeleton. It localises to the microtubule organizing center. The protein localises to the centrosome. The protein resides in the spindle. Its subcellular location is the nucleus. Its activity is regulated as follows. GTPase-activating activity is inhibited in the folliculin complex (LFC), which stabilizes the GDP-bound state of RagA/RRAGA (or RagB/RRAGB), because Arg-164 is located far from the RagC/RRAGC or RagD/RRAGD nucleotide pocket. Disassembly of the LFC complex upon amino acid restimulation liberates the GTPase-activating activity. In terms of biological role, multi-functional protein, involved in both the cellular response to amino acid availability and in the regulation of glycolysis. GTPase-activating protein that plays a key role in the cellular response to amino acid availability through regulation of the non-canonical mTORC1 signaling cascade controlling the MiT/TFE factors TFEB and TFE3. Activates mTORC1 by acting as a GTPase-activating protein: specifically stimulates GTP hydrolysis by RagC/RRAGC or RagD/RRAGD, promoting the conversion to the GDP-bound state of RagC/RRAGC or RagD/RRAGD, and thereby activating the kinase activity of mTORC1. The GTPase-activating activity is inhibited during starvation and activated in presence of nutrients. Acts as a key component for non-canonical mTORC1-dependent control of the MiT/TFE factors TFEB and TFE3, while it is not involved in mTORC1-dependent phosphorylation of canonical RPS6KB1/S6K1 and EIF4EBP1/4E-BP1. In low-amino acid conditions, the lysosomal folliculin complex (LFC) is formed on the membrane of lysosomes, which inhibits the GTPase-activating activity of FLCN, inactivates mTORC1 and maximizes nuclear translocation of TFEB and TFE3. Upon amino acid restimulation, RagA/RRAGA (or RagB/RRAGB) nucleotide exchange promotes disassembly of the LFC complex and liberates the GTPase-activating activity of FLCN, leading to activation of mTORC1 and subsequent cytoplasmic retention of TFEB and TFE3. Indirectly acts as a positive regulator of Wnt signaling by promoting mTOR-dependent cytoplasmic retention of MiT/TFE factor TFE3. Required for the exit of hematopoietic stem cell from pluripotency by promoting mTOR-dependent cytoplasmic retention of TFE3, thereby increasing Wnt signaling. Involved in the control of embryonic stem cells differentiation; together with LAMTOR1 it is necessary to recruit and activate RagC/RRAGC and RagD/RRAGD at the lysosomes, and to induce exit of embryonic stem cells from pluripotency via non-canonical, mTOR-independent TFE3 inactivation. Acts as an inhibitor of browning of adipose tissue by regulating mTOR-dependent cytoplasmic retention of TFE3. In response to flow stress, regulates STK11/LKB1 accumulation and mTORC1 activation through primary cilia: may act by recruiting STK11/LKB1 to primary cilia for activation of AMPK resided at basal bodies, causing mTORC1 down-regulation. Together with FNIP1 and/or FNIP2, regulates autophagy: following phosphorylation by ULK1, interacts with GABARAP and promotes autophagy. Required for starvation-induced perinuclear clustering of lysosomes by promoting association of RILP with its effector RAB34. Regulates glycolysis by binding to lactate dehydrogenase LDHA, acting as an uncompetitive inhibitor. In Rattus norvegicus (Rat), this protein is Folliculin.